The chain runs to 199 residues: Chaperone protein TorD (199 aa).

The protein belongs to the TorD/DmsD family. TorD subfamily.

Its subcellular location is the cytoplasm. In terms of biological role, involved in the biogenesis of TorA. Acts on TorA before the insertion of the molybdenum cofactor and, as a result, probably favors a conformation of the apoenzyme that is competent for acquiring the cofactor. This is Chaperone protein TorD from Escherichia coli O139:H28 (strain E24377A / ETEC).